Reading from the N-terminus, the 265-residue chain is Probable aquaporin TIP3-2 (265 aa).

2 consecutive transmembrane segments (helical) span residues 32–52 and 62–82; these read LSEF…VYGL and LGGL…AVAV. Residues 92–94 carry the NPA 1 motif; that stretch reads NPA. The next 3 helical transmembrane spans lie at 110-130, 151-171, and 179-199; these read AALY…LLRL, ALLL…ATAV, and DIAP…GGPF. The short motif at 205-207 is the NPA 2 element; that stretch reads NPA. The helical transmembrane segment at 223 to 243 threads the bilayer; it reads WVYWLGPLIGAGMAGALYEFV.

Belongs to the MIP/aquaporin (TC 1.A.8) family. TIP (TC 1.A.8.10) subfamily. In terms of tissue distribution, expressed in leaves and at lower levels in roots.

The protein resides in the vacuole membrane. Its function is as follows. Aquaporins facilitate the transport of water and small neutral solutes across cell membranes. May be involved in transport from the vacuolar compartment to the cytoplasm. This Oryza sativa subsp. japonica (Rice) protein is Probable aquaporin TIP3-2 (TIP3-2).